The sequence spans 435 residues: GTPase Der (435 aa).

EngA-type G domains are found at residues 4–167 and 175–350; these read PVVA…PEKD and IRFS…DNHN. GTP contacts are provided by residues 10–17, 57–61, 119–122, 181–188, 228–232, and 293–296; these read GRPNVGKS, DTGGI, NKAD, DTAGI, and NKWD. A KH-like domain is found at 351–435; it reads KRVQSATLND…PIHLIERARK (85 aa).

This sequence belongs to the TRAFAC class TrmE-Era-EngA-EngB-Septin-like GTPase superfamily. EngA (Der) GTPase family. Associates with the 50S ribosomal subunit.

Functionally, GTPase that plays an essential role in the late steps of ribosome biogenesis. In Levilactobacillus brevis (strain ATCC 367 / BCRC 12310 / CIP 105137 / JCM 1170 / LMG 11437 / NCIMB 947 / NCTC 947) (Lactobacillus brevis), this protein is GTPase Der.